The primary structure comprises 554 residues: Dihydroxy-acid dehydratase (554 aa).

D78 contributes to the Mg(2+) binding site. C119 provides a ligand contact to [2Fe-2S] cluster. Mg(2+)-binding residues include D120 and K121. Residue K121 is modified to N6-carboxylysine. Residue C192 participates in [2Fe-2S] cluster binding. Residue E443 participates in Mg(2+) binding. S469 acts as the Proton acceptor in catalysis.

Belongs to the IlvD/Edd family. In terms of assembly, homodimer. It depends on [2Fe-2S] cluster as a cofactor. Mg(2+) serves as cofactor.

It catalyses the reaction (2R)-2,3-dihydroxy-3-methylbutanoate = 3-methyl-2-oxobutanoate + H2O. The enzyme catalyses (2R,3R)-2,3-dihydroxy-3-methylpentanoate = (S)-3-methyl-2-oxopentanoate + H2O. It participates in amino-acid biosynthesis; L-isoleucine biosynthesis; L-isoleucine from 2-oxobutanoate: step 3/4. It functions in the pathway amino-acid biosynthesis; L-valine biosynthesis; L-valine from pyruvate: step 3/4. Functionally, functions in the biosynthesis of branched-chain amino acids. Catalyzes the dehydration of (2R,3R)-2,3-dihydroxy-3-methylpentanoate (2,3-dihydroxy-3-methylvalerate) into 2-oxo-3-methylpentanoate (2-oxo-3-methylvalerate) and of (2R)-2,3-dihydroxy-3-methylbutanoate (2,3-dihydroxyisovalerate) into 2-oxo-3-methylbutanoate (2-oxoisovalerate), the penultimate precursor to L-isoleucine and L-valine, respectively. The sequence is that of Dihydroxy-acid dehydratase from Clostridium novyi (strain NT).